The chain runs to 98 residues: UPF0213 protein in ldhD 5'region (98 aa).

Residues 7–84 (NGFYFYVLWC…KKQSRKEKLK (78 aa)) form the GIY-YIG domain.

Belongs to the UPF0213 family.

The chain is UPF0213 protein in ldhD 5'region from Pediococcus acidilactici.